Consider the following 162-residue polypeptide: EF-hand calcium-binding domain-containing protein 11 (162 aa).

3 consecutive EF-hand domains span residues 18–53, 91–126, and 127–162; these read SERR…LFGY, LYRN…VAPK, and LPAR…GQSK. Positions 140, 142, 144, 146, and 151 each coordinate Ca(2+).

This chain is EF-hand calcium-binding domain-containing protein 11 (Efcab11), found in Mus musculus (Mouse).